Here is a 186-residue protein sequence, read N- to C-terminus: Lipid A palmitoyltransferase PagP (186 aa).

An N-terminal signal peptide occupies residues 1 to 25 (MKVSKYVAIFFFVFIQLISVGKVFA). Catalysis depends on residues His-58, Asp-101, and Ser-102.

The protein belongs to the lipid A palmitoyltransferase family. Homodimer.

The protein localises to the cell outer membrane. The catalysed reaction is lipid A (E. coli) + a 1-hexadecanoyl-2-acyl-sn-glycero-3-phosphocholine = hepta-acyl lipid A (E. coli) + a 2-acyl-sn-glycero-3-phosphocholine. It catalyses the reaction lipid IIA + a 1-hexadecanoyl-2-acyl-sn-glycero-3-phosphocholine = lipid IIB + a 2-acyl-sn-glycero-3-phosphocholine. It carries out the reaction lipid IVA (E. coli) + a 1-hexadecanoyl-2-acyl-sn-glycero-3-phosphocholine = lipid IVB (E. coli) + a 2-acyl-sn-glycero-3-phosphocholine. Functionally, transfers a palmitate residue from the sn-1 position of a phospholipid to the N-linked hydroxymyristate on the proximal unit of lipid A or its precursors. In Escherichia coli O6:K15:H31 (strain 536 / UPEC), this protein is Lipid A palmitoyltransferase PagP.